The sequence spans 689 residues: Polyribonucleotide nucleotidyltransferase (689 aa).

2 residues coordinate Mg(2+): Asp-482 and Asp-488. A KH domain is found at 549-608 (PRMITLTIPQNKIGELIGPGGKNIRKIQEDNNVKIDIEETGRVFISGVESDGVKSAKEYV). Residues 618 to 686 (GKIYKSRVTK…KQGRINLSIK (69 aa)) form the S1 motif domain.

Belongs to the polyribonucleotide nucleotidyltransferase family. It depends on Mg(2+) as a cofactor.

The protein localises to the cytoplasm. It catalyses the reaction RNA(n+1) + phosphate = RNA(n) + a ribonucleoside 5'-diphosphate. Its function is as follows. Involved in mRNA degradation. Catalyzes the phosphorolysis of single-stranded polyribonucleotides processively in the 3'- to 5'-direction. The chain is Polyribonucleotide nucleotidyltransferase from Endomicrobium trichonymphae.